Consider the following 441-residue polypeptide: Growth/differentiation factor 9 (441 aa).

The signal sequence occupies residues 1–29 (MALPSNFLLGVCCFAWLCFLSSLSSQAST). The propeptide occupies 30 to 306 (EESQSGASEN…EVERSPRRRR (277 aa)). Asn-163, Asn-229, Asn-258, and Asn-325 each carry an N-linked (GlcNAc...) asparagine glycan. Cystine bridges form between Cys-340-Cys-406, Cys-369-Cys-438, and Cys-373-Cys-440.

This sequence belongs to the TGF-beta family. In terms of assembly, homodimer or heterodimer (Potential). But, in contrast to other members of this family, cannot be disulfide-linked. In terms of processing, phosphorylated; phosphorylation is critical for GDF9 function. Ovary. Strongly expressed in germinal vesicle (GV) stage oocytes, MII-stage oocytes and in zygotes.

It localises to the secreted. Required for ovarian folliculogenesis. The protein is Growth/differentiation factor 9 (Gdf9) of Mus musculus (Mouse).